The primary structure comprises 1349 residues: Protein turtle homolog B (1349 aa).

The N-terminal stretch at 1–20 (MIWYVATFIASVIGTRGLAA) is a signal peptide. Topologically, residues 21–722 (EGAHGLREEP…DLTEDGLARP (702 aa)) are extracellular. Ig-like domains follow at residues 24-129 (HGLR…HNGS), 139-226 (PTFT…LLVQ), 228-320 (PPFI…AYLT), 324-415 (PARV…ARLV), and 420-504 (PYFT…THLT). 2 disulfides stabilise this stretch: Cys45/Cys113 and Cys161/Cys208. Residues Asn241 and Asn258 are each glycosylated (N-linked (GlcNAc...) asparagine). Intrachain disulfides connect Cys250/Cys303, Cys346/Cys397, and Cys442/Cys488. Fibronectin type-III domains follow at residues 512–604 (APGS…TLAF) and 614–708 (LVTP…STDI). Residue Asn624 is glycosylated (N-linked (GlcNAc...) asparagine). The helical transmembrane segment at 723-743 (VLAGIVATICFLAAAILFSTL) threads the bilayer. Topologically, residues 744–1349 (AACFVNKQRK…SPPERALSKL (606 aa)) are cytoplasmic. Disordered stretches follow at residues 758–817 (RKKD…EKEL), 911–1081 (QLTP…RGLP), and 1099–1349 (APKG…LSKL). Phosphoserine occurs at positions 775, 783, and 794. Polar residues predominate over residues 911–921 (QLTPLSSSQES). The span at 985–998 (VPEVGSPLSSVMSS) shows a compositional bias: low complexity. Polar residues-rich tracts occupy residues 1018 to 1033 (ENASNSTLPLTQTPTG), 1129 to 1141 (LVSQGQLRHTSQG), and 1199 to 1214 (SRLSPLTQSPLSSRTG). The residue at position 1136 (Arg1136) is an Omega-N-methylarginine. A phosphoserine mark is found at Ser1207 and Ser1215. Residues 1251–1271 (STPSTGSPSQSSRSGSPSYRP) are compositionally biased toward low complexity. Over residues 1283 to 1292 (PSPPPGPAPA) the composition is skewed to pro residues.

Belongs to the immunoglobulin superfamily. Turtle family. In terms of assembly, found in a complex with MAGI2 and NLGN2, where it interacts with MAGI2 (via PDZ 5 and PDZ 6 domains). N-glycosylated and sialylated. Not significantly O-glycosylated.

Its subcellular location is the postsynaptic cell membrane. The protein localises to the postsynaptic density. In terms of biological role, transmembrane protein which is abundantly expressed in interneurons, where it may regulate inhibitory synapse development. May mediate homophilic cell adhesion. The protein is Protein turtle homolog B (IGSF9B) of Homo sapiens (Human).